The chain runs to 273 residues: Dermonecrotic toxin LdSicTox-alphaIB1aiv (273 aa).

Histidine 5 is a catalytic residue. Residues glutamate 25 and aspartate 27 each contribute to the Mg(2+) site. The active-site Nucleophile is the histidine 41. 2 disulfide bridges follow: cysteine 45/cysteine 51 and cysteine 47/cysteine 190. Aspartate 85 is a Mg(2+) binding site. An N-linked (GlcNAc...) asparagine glycan is attached at asparagine 250.

Belongs to the arthropod phospholipase D family. Class II subfamily. It depends on Mg(2+) as a cofactor. As to expression, expressed by the venom gland.

It is found in the secreted. The catalysed reaction is an N-(acyl)-sphingosylphosphocholine = an N-(acyl)-sphingosyl-1,3-cyclic phosphate + choline. It carries out the reaction an N-(acyl)-sphingosylphosphoethanolamine = an N-(acyl)-sphingosyl-1,3-cyclic phosphate + ethanolamine. It catalyses the reaction a 1-acyl-sn-glycero-3-phosphocholine = a 1-acyl-sn-glycero-2,3-cyclic phosphate + choline. The enzyme catalyses a 1-acyl-sn-glycero-3-phosphoethanolamine = a 1-acyl-sn-glycero-2,3-cyclic phosphate + ethanolamine. In terms of biological role, dermonecrotic toxins cleave the phosphodiester linkage between the phosphate and headgroup of certain phospholipids (sphingolipid and lysolipid substrates), forming an alcohol (often choline) and a cyclic phosphate. This toxin acts on sphingomyelin (SM). It may also act on ceramide phosphoethanolamine (CPE), lysophosphatidylcholine (LPC) and lysophosphatidylethanolamine (LPE), but not on lysophosphatidylserine (LPS), and lysophosphatidylglycerol (LPG). It acts by transphosphatidylation, releasing exclusively cyclic phosphate products as second products. Induces dermonecrosis, hemolysis, increased vascular permeability, edema, inflammatory response, and platelet aggregation. The polypeptide is Dermonecrotic toxin LdSicTox-alphaIB1aiv (Loxosceles deserta (Desert recluse spider)).